The chain runs to 125 residues: Large ribosomal subunit protein bL12 (125 aa).

It belongs to the bacterial ribosomal protein bL12 family. Homodimer. Part of the ribosomal stalk of the 50S ribosomal subunit. Forms a multimeric L10(L12)X complex, where L10 forms an elongated spine to which 2 to 4 L12 dimers bind in a sequential fashion. Binds GTP-bound translation factors.

Its function is as follows. Forms part of the ribosomal stalk which helps the ribosome interact with GTP-bound translation factors. Is thus essential for accurate translation. This chain is Large ribosomal subunit protein bL12, found in Polaromonas sp. (strain JS666 / ATCC BAA-500).